Here is a 334-residue protein sequence, read N- to C-terminus: Holliday junction branch migration complex subunit RuvB (334 aa).

A large ATPase domain (RuvB-L) region spans residues alanine 4–tyrosine 184. ATP contacts are provided by residues arginine 24, glycine 65, lysine 68, threonine 69, threonine 70, glutamate 131 to tyrosine 133, arginine 174, tyrosine 184, and arginine 221. Position 69 (threonine 69) interacts with Mg(2+). Positions asparagine 185–aspartate 255 are small ATPAse domain (RuvB-S). The head domain (RuvB-H) stretch occupies residues asparagine 258–glutamate 334. The DNA site is built by arginine 294, arginine 313, and arginine 318.

Belongs to the RuvB family. In terms of assembly, homohexamer. Forms an RuvA(8)-RuvB(12)-Holliday junction (HJ) complex. HJ DNA is sandwiched between 2 RuvA tetramers; dsDNA enters through RuvA and exits via RuvB. An RuvB hexamer assembles on each DNA strand where it exits the tetramer. Each RuvB hexamer is contacted by two RuvA subunits (via domain III) on 2 adjacent RuvB subunits; this complex drives branch migration. In the full resolvosome a probable DNA-RuvA(4)-RuvB(12)-RuvC(2) complex forms which resolves the HJ.

Its subcellular location is the cytoplasm. It catalyses the reaction ATP + H2O = ADP + phosphate + H(+). The RuvA-RuvB-RuvC complex processes Holliday junction (HJ) DNA during genetic recombination and DNA repair, while the RuvA-RuvB complex plays an important role in the rescue of blocked DNA replication forks via replication fork reversal (RFR). RuvA specifically binds to HJ cruciform DNA, conferring on it an open structure. The RuvB hexamer acts as an ATP-dependent pump, pulling dsDNA into and through the RuvAB complex. RuvB forms 2 homohexamers on either side of HJ DNA bound by 1 or 2 RuvA tetramers; 4 subunits per hexamer contact DNA at a time. Coordinated motions by a converter formed by DNA-disengaged RuvB subunits stimulates ATP hydrolysis and nucleotide exchange. Immobilization of the converter enables RuvB to convert the ATP-contained energy into a lever motion, pulling 2 nucleotides of DNA out of the RuvA tetramer per ATP hydrolyzed, thus driving DNA branch migration. The RuvB motors rotate together with the DNA substrate, which together with the progressing nucleotide cycle form the mechanistic basis for DNA recombination by continuous HJ branch migration. Branch migration allows RuvC to scan DNA until it finds its consensus sequence, where it cleaves and resolves cruciform DNA. The sequence is that of Holliday junction branch migration complex subunit RuvB from Shewanella putrefaciens (strain CN-32 / ATCC BAA-453).